Here is a 356-residue protein sequence, read N- to C-terminus: Cysteine proteinase 3 (356 aa).

A signal peptide spans 1 to 16 (MSRLSLVLILVAGLFA). A propeptide spans 17-138 (TALAGPATFA…KGNLKLTNVV (122 aa)) (activation peptide). N-linked (GlcNAc...) asparagine glycosylation is present at Asn-123. Intrachain disulfides connect Cys-160-Cys-203 and Cys-194-Cys-236. The active site involves Cys-163. Asn-252 carries N-linked (GlcNAc...) asparagine glycosylation. Cys-294 and Cys-344 form a disulfide bridge. Catalysis depends on residues His-303 and Asn-323.

It belongs to the peptidase C1 family. As to expression, predominantly expressed in stem and root.

The protein localises to the vacuole. The polypeptide is Cysteine proteinase 3 (CYP-3) (Solanum lycopersicum (Tomato)).